The sequence spans 90 residues: Conotoxin Mr22.1 (90 aa).

The first 18 residues, 1 to 18 (MMTRVFFAMFFLMALTEG), serve as a signal peptide directing secretion. The propeptide occupies 19–49 (WPRLYDSDCVRGRNMHITCFKDQTCGLTVKR). Trp-75 is subject to 6'-bromotryptophan.

The protein belongs to the E superfamily. Contains 4 disulfide bonds. In terms of tissue distribution, expressed by the venom duct.

The protein localises to the secreted. The sequence is that of Conotoxin Mr22.1 from Conus marmoreus (Marble cone).